Here is a 168-residue protein sequence, read N- to C-terminus: D-aminoacyl-tRNA deacylase 2 (168 aa).

The Gly-transPro motif, allows the protein to recognize chirality of D-amino acids motif lies at 160-161 (GP).

This sequence belongs to the DTD family. As to quaternary structure, homodimer.

It is found in the cytoplasm. The enzyme catalyses a D-aminoacyl-tRNA + H2O = a tRNA + a D-alpha-amino acid + H(+). It catalyses the reaction glycyl-tRNA(Ala) + H2O = tRNA(Ala) + glycine + H(+). It carries out the reaction D-tyrosyl-tRNA(Tyr) + H2O = D-tyrosine + tRNA(Tyr). The catalysed reaction is L-alanyl-tRNA(Thr) + H2O = tRNA(Thr) + L-alanine + H(+). Its function is as follows. Deacylates mischarged D-aminoacyl-tRNAs. Also deacylates mischarged glycyl-tRNA(Ala), protecting cells against glycine mischarging by AlaRS. Probably acts by rejecting L-amino acids from its binding site rather than specific recognition of D-amino acids. Catalyzes the hydrolysis of D-tyrosyl-tRNA(Tyr), has no activity on correctly charged L-tyrosyl-tRNA(Tyr). By recycling D-aminoacyl-tRNA to D-amino acids and free tRNA molecules, this enzyme counteracts the toxicity associated with the formation of D-aminoacyl-tRNA entities in vivo and helps enforce protein L-homochirality. In contrast to DTD1, deacylates L-Ala mischarged on tRNA(Thr)(G4.U69) by alanine-tRNA ligase AARS. Can deacylate L-Ala due to a relaxed specificity for substrate chirality caused by the trans conformation of the Gly-Pro motif in the active site. Also hydrolyzes correctly charged, achiral, glycyl-tRNA(Gly) in vitro, although in vivo EEF1A1/EF-Tu may protect cognate achiral glycyl-tRNA(Gly) from DTD2-mediated deacetylation. The sequence is that of D-aminoacyl-tRNA deacylase 2 (DTD2) from Homo sapiens (Human).